We begin with the raw amino-acid sequence, 240 residues long: Probable transcriptional regulatory protein jhp_0149 (240 aa).

Belongs to the TACO1 family.

The protein resides in the cytoplasm. The polypeptide is Probable transcriptional regulatory protein jhp_0149 (Helicobacter pylori (strain J99 / ATCC 700824) (Campylobacter pylori J99)).